A 357-amino-acid chain; its full sequence is tRNA N6-adenosine threonylcarbamoyltransferase (357 aa).

Positions 115 and 119 each coordinate Fe cation. Residues 137–141 (LASGG), aspartate 170, glycine 183, and asparagine 281 contribute to the substrate site. A Fe cation-binding site is contributed by aspartate 309.

This sequence belongs to the KAE1 / TsaD family. Requires Fe(2+) as cofactor.

It localises to the cytoplasm. It carries out the reaction L-threonylcarbamoyladenylate + adenosine(37) in tRNA = N(6)-L-threonylcarbamoyladenosine(37) in tRNA + AMP + H(+). Its function is as follows. Required for the formation of a threonylcarbamoyl group on adenosine at position 37 (t(6)A37) in tRNAs that read codons beginning with adenine. Is involved in the transfer of the threonylcarbamoyl moiety of threonylcarbamoyl-AMP (TC-AMP) to the N6 group of A37, together with TsaE and TsaB. TsaD likely plays a direct catalytic role in this reaction. The chain is tRNA N6-adenosine threonylcarbamoyltransferase from Nitrobacter winogradskyi (strain ATCC 25391 / DSM 10237 / CIP 104748 / NCIMB 11846 / Nb-255).